The following is a 591-amino-acid chain: L-fucose isomerase (591 aa).

Catalysis depends on proton acceptor residues Glu-337 and Asp-361. Mn(2+)-binding residues include Glu-337, Asp-361, and His-528.

It belongs to the L-fucose isomerase family. Homohexamer. Mn(2+) is required as a cofactor.

Its subcellular location is the cytoplasm. The catalysed reaction is L-fucose = L-fuculose. Its pathway is carbohydrate degradation; L-fucose degradation; L-lactaldehyde and glycerone phosphate from L-fucose: step 1/3. Converts the aldose L-fucose into the corresponding ketose L-fuculose. This Salmonella choleraesuis (strain SC-B67) protein is L-fucose isomerase.